Consider the following 167-residue polypeptide: Menaquinol:cytochrome c reductase iron-sulfur subunit (167 aa).

Residues 59–158 (TKEPQRFDFK…QEVKDGFLYL (100 aa)) enclose the Rieske domain. 4 residues coordinate [2Fe-2S] cluster: Cys-100, His-102, Cys-121, and His-124. A disulfide bridge connects residues Cys-105 and Cys-123.

The protein belongs to the Rieske iron-sulfur protein family. In terms of assembly, the main subunits of the menaquinol:cytochrome c complex are a Rieske-type iron-sulfur protein (QcrA), a cytochrome b (QcrB) and a cytochrome c (QcrC). The cofactor is [2Fe-2S] cluster.

Its function is as follows. Component of the menaquinol:cytochrome c reductase complex. The Rieske protein is a high potential 2Fe-2S protein. This is Menaquinol:cytochrome c reductase iron-sulfur subunit (qcrA) from Bacillus subtilis (strain 168).